We begin with the raw amino-acid sequence, 446 residues long: MSSTWEKIDKNKIKLSVEVDENRVEDALEQAYKKVVKQVEIPGFRKGKVPRKILENRFGPEVLYEDAIEILVPEAYQEALEEHEIEPVDQPEIDIDQMEKGQPLKFNATVEVKPEVELGTYKGLEVEKEKVEVTEEDVENELKQMQEQHAEYEDVEDGEAENGDRLVIDFEGYVDGEPIEGGQAENHNIELGSNQFIPGFEEQLVGSKPGEEKEVKVTFPEDYQNEELKGKEATFNVKVKEIKKKNLLPIDDEFAKDVSDFDTLEEFKNDIRNRLEEEAERAAEQQVEEQVVTKALENAEVEIPQPMIDQEVDNMLKEFEQNLSYQGLNLDTYYKLANTDEDAMKEQFKGSAETRVKRNLVLEAIKDEEGITATEEEIDEEINKIAEQAQQEADKIKEFLEMQGRMSQLKNEIAIRKSVDLLKDEAKVTVVEKSNDSEEETQGNTE.

The 86-residue stretch at 163 to 248 (GDRLVIDFEG…VKEIKKKNLL (86 aa)) folds into the PPIase FKBP-type domain.

The protein belongs to the FKBP-type PPIase family. Tig subfamily.

The protein resides in the cytoplasm. The enzyme catalyses [protein]-peptidylproline (omega=180) = [protein]-peptidylproline (omega=0). Its function is as follows. Involved in protein export. Acts as a chaperone by maintaining the newly synthesized protein in an open conformation. Functions as a peptidyl-prolyl cis-trans isomerase. This is Trigger factor from Natranaerobius thermophilus (strain ATCC BAA-1301 / DSM 18059 / JW/NM-WN-LF).